We begin with the raw amino-acid sequence, 351 residues long: Geranylgeranyl pyrophosphate synthase (351 aa).

3 residues coordinate isopentenyl diphosphate: Lys55, Arg58, and Gln93. Mg(2+) contacts are provided by Asp100 and Asp104. Arg109 serves as a coordination point for dimethylallyl diphosphate. Residue Arg110 participates in isopentenyl diphosphate binding. 5 residues coordinate dimethylallyl diphosphate: Lys196, Thr197, Gln236, Lys253, and Lys262.

Belongs to the FPP/GGPP synthase family. In terms of assembly, interacts with fps1. Requires Mg(2+) as cofactor.

The protein localises to the cytoplasm. The protein resides in the nucleus. It catalyses the reaction isopentenyl diphosphate + dimethylallyl diphosphate = (2E)-geranyl diphosphate + diphosphate. It carries out the reaction isopentenyl diphosphate + (2E)-geranyl diphosphate = (2E,6E)-farnesyl diphosphate + diphosphate. The enzyme catalyses isopentenyl diphosphate + (2E,6E)-farnesyl diphosphate = (2E,6E,10E)-geranylgeranyl diphosphate + diphosphate. Its pathway is isoprenoid biosynthesis; farnesyl diphosphate biosynthesis; farnesyl diphosphate from geranyl diphosphate and isopentenyl diphosphate: step 1/1. It participates in isoprenoid biosynthesis; geranyl diphosphate biosynthesis; geranyl diphosphate from dimethylallyl diphosphate and isopentenyl diphosphate: step 1/1. The protein operates within isoprenoid biosynthesis; geranylgeranyl diphosphate biosynthesis; geranylgeranyl diphosphate from farnesyl diphosphate and isopentenyl diphosphate: step 1/1. Its function is as follows. Catalyzes the trans-addition of the 3 molecules of IPP onto DMAPP to form geranylgeranyl pyrophosphate. Required for the membrane attachment of ypt7 and rhb1. May be involved in vesicle trafficking and protein sorting. Required for forespore membrane formation. The protein is Geranylgeranyl pyrophosphate synthase (spo9) of Schizosaccharomyces pombe (strain 972 / ATCC 24843) (Fission yeast).